Reading from the N-terminus, the 178-residue chain is N-alpha-acetyltransferase 20 (178 aa).

Positions 2–157 constitute an N-acetyltransferase domain; sequence TTLRAFTCDD…DAYDMRKALS (156 aa).

Belongs to the acetyltransferase family. ARD1 subfamily. As to quaternary structure, component of the N-terminal acetyltransferase B (NatB) complex which is composed of naa20 and naa25.

The protein localises to the cytoplasm. The protein resides in the nucleus. The catalysed reaction is N-terminal L-methionyl-L-asparaginyl-[protein] + acetyl-CoA = N-terminal N(alpha)-acetyl-L-methionyl-L-asparaginyl-[protein] + CoA + H(+). It carries out the reaction N-terminal L-methionyl-L-glutaminyl-[protein] + acetyl-CoA = N-terminal N(alpha)-acetyl-L-methionyl-L-glutaminyl-[protein] + CoA + H(+). The enzyme catalyses N-terminal L-methionyl-L-aspartyl-[protein] + acetyl-CoA = N-terminal N(alpha)-acetyl-L-methionyl-L-aspartyl-[protein] + CoA + H(+). It catalyses the reaction N-terminal L-methionyl-L-glutamyl-[protein] + acetyl-CoA = N-terminal N(alpha)-acetyl-L-methionyl-L-glutamyl-[protein] + CoA + H(+). Its function is as follows. Catalytic subunit of the NatB complex which catalyzes acetylation of the N-terminal methionine residues of peptides beginning with Met-Asp, Met-Glu, Met-Asn and Met-Gln. Proteins with cell cycle functions are overrepresented in the pool of NatB substrates. Required for maintaining the structure and function of actomyosin fibers and for proper cellular migration. The sequence is that of N-alpha-acetyltransferase 20 (naa20) from Danio rerio (Zebrafish).